Reading from the N-terminus, the 271-residue chain is Na(+), Li(+), K(+)/H(+) antiporter subunit B (271 aa).

The next 7 helical transmembrane spans lie at 2 to 22 (ILLT…AIIF), 36 to 56 (LPQV…FLVG), 94 to 114 (WVYL…PSLI), 130 to 150 (PFML…LGTW), 152 to 172 (IVMG…VIIQ), 193 to 213 (STIT…SIPG), and 216 to 236 (ALMD…ITVM). The disordered stretch occupies residues 252 to 271 (TPHLSYSKAPPPSKGDNNAL).

Belongs to the UmpA/UmpB family. In terms of assembly, heterodimer composed of UmpA and UmpB.

It localises to the cell membrane. Its function is as follows. Part of a two-component antiporter that catalyzes the efflux of Na(+), Li(+) and K(+) in exchange for external protons. Shows a preference for Na(+), followed by K(+) and Li(+). The chain is Na(+), Li(+), K(+)/H(+) antiporter subunit B from Vreelandella zhaodongensis (Halomonas zhaodongensis).